The primary structure comprises 391 residues: Probable methanogen homoaconitase large subunit (391 aa).

[4Fe-4S] cluster is bound by residues Cys275, Cys333, and Cys336.

The protein belongs to the aconitase/IPM isomerase family. LeuC type 2 subfamily. Heterotetramer of 2 HacA and 2 HacB proteins.

It carries out the reaction (2R)-homocitrate = (2R,3S)-homoisocitrate. The enzyme catalyses (2R)-homocitrate = cis-homoaconitate + H2O. It catalyses the reaction (2R,3S)-homoisocitrate = cis-homoaconitate + H2O. The catalysed reaction is cis-(homo)2aconitate + H2O = (2R,3S)-iso(homo)2citrate. It carries out the reaction cis-(homo)3aconitate + H2O = (2R,3S)-iso(homo)3citrate. Its pathway is organic acid metabolism; 2-oxosuberate biosynthesis. In terms of biological role, component of a hydro-lyase with broad substrate specificity for cis-unsaturated tricarboxylic acids. Catalyzes both the reversible dehydration of (R)-homocitrate ((R)-2-hydroxybutane-1,2,4-tricarboxylate) to produce cis-homoaconitate ((Z)-but-1-ene-1,2,4-tricarboxylate), and its hydration to homoisocitrate ((1R,2S)-1-hydroxybutane-1,2,4-tricarboxylate). Is also able to hydrate the analogous longer chain substrates cis-homo(2)-aconitate, cis-homo(3)-aconitate. These reactions are part of the biosynthesis pathway of coenzyme B. This is Probable methanogen homoaconitase large subunit (hacA) from Methanosarcina mazei (strain ATCC BAA-159 / DSM 3647 / Goe1 / Go1 / JCM 11833 / OCM 88) (Methanosarcina frisia).